The chain runs to 476 residues: Glycogen synthase (476 aa).

Residue Lys-15 participates in ADP-alpha-D-glucose binding.

The protein belongs to the glycosyltransferase 1 family. Bacterial/plant glycogen synthase subfamily.

The catalysed reaction is [(1-&gt;4)-alpha-D-glucosyl](n) + ADP-alpha-D-glucose = [(1-&gt;4)-alpha-D-glucosyl](n+1) + ADP + H(+). The protein operates within glycan biosynthesis; glycogen biosynthesis. Its function is as follows. Synthesizes alpha-1,4-glucan chains using ADP-glucose. The polypeptide is Glycogen synthase (Haemophilus influenzae (strain PittEE)).